A 424-amino-acid polypeptide reads, in one-letter code: S-adenosylmethionine synthase (424 aa).

His14 is an ATP binding site. Residue Asp16 coordinates Mg(2+). Glu42 serves as a coordination point for K(+). Glu55 and Gln98 together coordinate L-methionine. The flexible loop stretch occupies residues 98 to 108 (QSNDISRGIER). ATP contacts are provided by residues 165–167 (DAK), 242–243 (KF), Asp251, 257–258 (RK), Ala274, and Lys278. Asp251 is a binding site for L-methionine. Position 282 (Lys282) interacts with L-methionine.

It belongs to the AdoMet synthase family. Homotetramer; dimer of dimers. It depends on Mg(2+) as a cofactor. K(+) serves as cofactor.

The protein localises to the cytoplasm. It carries out the reaction L-methionine + ATP + H2O = S-adenosyl-L-methionine + phosphate + diphosphate. The protein operates within amino-acid biosynthesis; S-adenosyl-L-methionine biosynthesis; S-adenosyl-L-methionine from L-methionine: step 1/1. Catalyzes the formation of S-adenosylmethionine (AdoMet) from methionine and ATP. The overall synthetic reaction is composed of two sequential steps, AdoMet formation and the subsequent tripolyphosphate hydrolysis which occurs prior to release of AdoMet from the enzyme. The sequence is that of S-adenosylmethionine synthase from Azobacteroides pseudotrichonymphae genomovar. CFP2.